The primary structure comprises 71 residues: Putative RNA-binding regulatory peptide (71 aa).

In terms of assembly, interacts with IGF2BP1 (via KH3 and KH4 domains); the interaction results in increased binding of IGF2BP1 to N6-methyladenosine (m6A)-containing mRNAs. Detected in colon (at protein level).

Functionally, enhances binding of IGF2BP1 to N6-methyladenosine (m6A)-containing mRNAs, thereby contributing to increased mRNA stability. Also increases the interaction of IGF2BP1 with RNA stabilizers ELAVL1/HUR, MATR3 and PABPC1, and increases the interaction of RNA stabilizers ELAVL1/HUR, MATR3 and PABPC1 with m6A-containing mRNAs. Contributes to MYC stability by enhancing binding of IGF2BP1 to m6A-containing MYC mRNAs and increasing recruitment of RNA stabilizing proteins to m6A-containing MYC mRNAs. This Homo sapiens (Human) protein is Putative RNA-binding regulatory peptide.